The primary structure comprises 480 residues: MSKRSDGSQPRTIVDKVWDAHVVRAETPDAPAILYIDLHLVHEVTSPQAFTVLRERGLKLRRPERTLATMDHSIPTLPRGADGRWPFVDAQAAAQVSQMERNCADFGVELHGLGDDAQGVVHVFGPEMGATQPGMTVVCGDSHTATHGAFGALAFGIGTSEVGHVLASQCLLQRRPRTLAVRVDGELGPGLSAKDLILAIIAKLGVGGGTGHVIEYLGPAVRALSMEGRMTLCNMSIEAGARAGLVAPDDTTFEWLAGRPRAPKGAAWDEAVARWRALPSDDGATYDRELRLDAAALEPMITFGTNPGQGIAVTGLVPDPVAERDASARATLEAALRYMGLVPGKPIAGQKVDVVFIGSCTNGRIEDMREAARVLKGRKVRTRTLVVPGSHRVKKDAEAEGIDRIVREAGAEWREPGCSMCIAMNGDNLQAGQYCVSTSNRNFEGRQGPGGRTLLASPLTAAAAAVTGAVADPRRVLEGR.

[4Fe-4S] cluster contacts are provided by cysteine 360, cysteine 418, and cysteine 421.

Belongs to the aconitase/IPM isomerase family. LeuC type 1 subfamily. In terms of assembly, heterodimer of LeuC and LeuD. [4Fe-4S] cluster serves as cofactor.

It carries out the reaction (2R,3S)-3-isopropylmalate = (2S)-2-isopropylmalate. It participates in amino-acid biosynthesis; L-leucine biosynthesis; L-leucine from 3-methyl-2-oxobutanoate: step 2/4. Functionally, catalyzes the isomerization between 2-isopropylmalate and 3-isopropylmalate, via the formation of 2-isopropylmaleate. The chain is 3-isopropylmalate dehydratase large subunit from Anaeromyxobacter dehalogenans (strain 2CP-1 / ATCC BAA-258).